A 104-amino-acid chain; its full sequence is MLYLLKKLKHIDSYGESNLSMFYLKFYCPWKLCPLLPILYGRNKSVQNAWSCHKLHRFIDFPTPSANMNFFFFIRVCYGTVSLFISTFLKKISFFIYVNFTVYF.

This is an uncharacterized protein from Saccharomyces cerevisiae (strain ATCC 204508 / S288c) (Baker's yeast).